The chain runs to 149 residues: Large ribosomal subunit protein bL9 (149 aa).

This sequence belongs to the bacterial ribosomal protein bL9 family.

Its function is as follows. Binds to the 23S rRNA. The sequence is that of Large ribosomal subunit protein bL9 from Aliivibrio salmonicida (strain LFI1238) (Vibrio salmonicida (strain LFI1238)).